Reading from the N-terminus, the 450-residue chain is MKHTLPSALVTLWRDSPGYESARSRTFNQRVPPELPYAIVKPKNVEQIQQAVQLAIDLDKQIRIRSGGHSLAGWTLCADSILIDLVDFMHLEYDATTAIASASPSATSAQLNDLLVPHGRFVPVGHCGDVGLGGFFLQGGMGLNCRSYGWACEYLVGVDLITADGEYKHCSESENADLFWAARGAGPEFPAIVTRFFIRTRPAAAKHEKSTFIWPVACSDAVVSWILKILPELHADIEPLVVSTIVPGPNIAAILVQFLVFLGTNETGAEKLEPSLTAMPDGTIMEFKGVSTSIQQEYVSQEGTMPRDSRYICDSVWFKDGIDFVAVTRRMFREFPRDRSMVYWEPKYPTSRRKLPDMAFSLQADQYLALFAIFEDSQQDQEQGIRIQEFIQEIEPYVLGTFAADGVPAVRKTQYWSAEVIERLYSVCQKWDPAHRLGCTLLDPTRKMKS.

Residues 32–203 (PPELPYAIVK…TRFFIRTRPA (172 aa)) enclose the FAD-binding PCMH-type domain.

Belongs to the oxygen-dependent FAD-linked oxidoreductase family. FAD is required as a cofactor.

The protein operates within secondary metabolite biosynthesis. FAD-linked oxidoreductase; part of the gene cluster that mediates the biosynthesis of the indole diterpenes penitrems. The geranylgeranyl diphosphate (GGPP) synthase penG catalyzes the first step in penitrem biosynthesis via conversion of farnesyl pyrophosphate and isopentyl pyrophosphate into geranylgeranyl pyrophosphate (GGPP). Condensation of indole-3-glycerol phosphate with GGPP by the prenyl transferase penC then forms 3-geranylgeranylindole (3-GGI). Epoxidation by the FAD-dependent monooxygenase penM leads to a epoxidized-GGI that is substrate of the terpene cyclase penB for cyclization to yield paspaline. Paspaline is subsequently converted to 13-desoxypaxilline by the cytochrome P450 monooxygenase penP, the latter being then converted to paxilline by the cytochrome P450 monooxygenase penQ. Paxilline is converted to beta-paxitriol via C-10 ketoreduction by the short-chain dehydrogenase PC-15 which can be monoprenylated at the C-20 by the indole diterpene prenyltransferase penD. A two-step elimination (acetylation and elimination) process performed by the O-acetyltransferase PC-16 and the P.simplicissimum ptmI-ortholog not yet identified in P.crustosum, leads to the production of the prenylated form of penijanthine. The FAD-linked oxidoreductase ptmO then converts the prenylated form of penijanthine into PC-M5 which is in turn transformed into PC-M4 by the aromatic dimethylallyltransferase PC-22. A series of oxidation steps involving 4 cytochrome P450 monooxygenases (PC-21, PC-05, PC-23, PC-20) and a FAD-dependent monooxygenase (PC-14) are required for the transformation of PC-M4 to penitrems A and E. Synthesis of these final products is proposed to proceed via penitrems D and C (PC-21, PC-05, PC-14) and penitrems B and F (PC-21, PC-05, PC-14, PC-23). This is FAD-linked oxidoreductase penO from Penicillium crustosum (Blue mold fungus).